Consider the following 106-residue polypeptide: Cytochrome c oxidase assembly protein COX16 homolog, mitochondrial (106 aa).

Residues M1–T15 lie on the Mitochondrial matrix side of the membrane. The chain crosses the membrane as a helical span at residues L16–L33. Residues R34 to T106 lie on the Mitochondrial intermembrane side of the membrane. A disordered region spans residues I81–T106.

Belongs to the COX16 family. In terms of assembly, associates with the MITRAC complex. Interacts with MT-CO2/COX; specifically interacts with newly synthesized MT-CO2/COX. Interacts with SCO1, SCO2 and COA6.

The protein resides in the mitochondrion inner membrane. Its function is as follows. Required for the assembly of the mitochondrial respiratory chain complex IV (CIV), also known as cytochrome c oxidase. Promotes the insertion of copper into the active site of cytochrome c oxidase subunit II (MT-CO2/COX2). Interacts specifically with newly synthesized MT-CO2/COX and its copper center-forming metallochaperones SCO1, SCO2 and COA6. Probably facilitates MT-CO2/COX2 association with the MITRAC assembly intermediate containing MT-CO1/COX1, thereby participating in merging the MT-CO1/COX1 and MT-CO2/COX2 assembly lines. This Mus musculus (Mouse) protein is Cytochrome c oxidase assembly protein COX16 homolog, mitochondrial.